A 325-amino-acid chain; its full sequence is Thiamine-monophosphate kinase (325 aa).

Mg(2+)-binding residues include Asp30, Ser45, Thr46, and Asp47. Position 54 (His54) interacts with substrate. Mg(2+) is bound by residues Asp75 and Asp122. Residues 121 to 122 (GD) and Arg146 each bind ATP. Residue Asp212 coordinates Mg(2+). Ser214 is an ATP binding site. Asp215 serves as a coordination point for Mg(2+). Positions 263 and 319 each coordinate substrate.

Belongs to the thiamine-monophosphate kinase family.

It catalyses the reaction thiamine phosphate + ATP = thiamine diphosphate + ADP. It participates in cofactor biosynthesis; thiamine diphosphate biosynthesis; thiamine diphosphate from thiamine phosphate: step 1/1. With respect to regulation, is markedly activated by the monovalent cations K(+), NH(4)(+), and Rb(+). Is significantly inhibited by ADP, AMP, p-chloromercuribenzoate, N-ethylmaleimide, pyrophosphate, and EDTA. Functionally, catalyzes the ATP-dependent phosphorylation of thiamine-monophosphate (TMP) to form thiamine-pyrophosphate (TPP), the active form of vitamin B1. Cannot use thiamine as substrate. Is highly specific for ATP as phosphate donor. The chain is Thiamine-monophosphate kinase (thiL) from Escherichia coli (strain K12).